The following is a 201-amino-acid chain: Recombination protein RecR (201 aa).

The segment at 60–75 (CSRCGNVDTVDPCIVC) adopts a C4-type zinc-finger fold. One can recognise a Toprim domain in the interval 83–178 (SVIIVVEDVS…KITRLAHGVP (96 aa)).

It belongs to the RecR family.

Its function is as follows. May play a role in DNA repair. It seems to be involved in an RecBC-independent recombinational process of DNA repair. It may act with RecF and RecO. The protein is Recombination protein RecR of Rhizobium johnstonii (strain DSM 114642 / LMG 32736 / 3841) (Rhizobium leguminosarum bv. viciae).